Consider the following 111-residue polypeptide: Rubredoxin (111 aa).

The Rubredoxin-like domain occupies Leu11–Ile62. Residues Cys16, Cys19, Cys49, and Cys52 each contribute to the Fe cation site.

Belongs to the rubredoxin family. Fe(3+) is required as a cofactor.

Rubredoxin is a small nonheme, iron protein lacking acid-labile sulfide. Its single Fe, chelated to 4 Cys, functions as an electron acceptor and may also stabilize the conformation of the molecule. Could be involved in hydrogenase-linked redox processes. In Trichormus variabilis (strain ATCC 29413 / PCC 7937) (Anabaena variabilis), this protein is Rubredoxin (rub).